A 198-amino-acid chain; its full sequence is Nucleoside triphosphate pyrophosphatase (198 aa).

D74 functions as the Proton acceptor in the catalytic mechanism.

It belongs to the Maf family. A divalent metal cation serves as cofactor.

The protein resides in the cytoplasm. It catalyses the reaction a ribonucleoside 5'-triphosphate + H2O = a ribonucleoside 5'-phosphate + diphosphate + H(+). The enzyme catalyses a 2'-deoxyribonucleoside 5'-triphosphate + H2O = a 2'-deoxyribonucleoside 5'-phosphate + diphosphate + H(+). Nucleoside triphosphate pyrophosphatase. May have a dual role in cell division arrest and in preventing the incorporation of modified nucleotides into cellular nucleic acids. This chain is Nucleoside triphosphate pyrophosphatase, found in Sphingopyxis alaskensis (strain DSM 13593 / LMG 18877 / RB2256) (Sphingomonas alaskensis).